Here is an 839-residue protein sequence, read N- to C-terminus: Pre-mRNA-splicing factor syf1 (839 aa).

HAT repeat units lie at residues tyrosine 12–glutamine 44, glycine 46–asparagine 78, alanine 90–glutamine 122, proline 124–serine 158, glycine 274–serine 309, aspartate 377–serine 415, glycine 417–arginine 453, alanine 470–leucine 502, alanine 507–glutamate 539, lysine 541–aspartate 575, isoleucine 578–glutamate 612, phenylalanine 650–arginine 684, and glycine 686–glutamine 720. A disordered region spans residues glutamine 758–glutamate 839. Positions glutamate 762–aspartate 782 are enriched in basic and acidic residues. Acidic residues predominate over residues isoleucine 830–glutamate 839.

Belongs to the crooked-neck family. In terms of assembly, associated with the spliceosome.

It localises to the nucleus. Functionally, involved in pre-mRNA splicing and cell cycle progression. The polypeptide is Pre-mRNA-splicing factor syf1 (syf1) (Aspergillus fumigatus (strain ATCC MYA-4609 / CBS 101355 / FGSC A1100 / Af293) (Neosartorya fumigata)).